The primary structure comprises 503 residues: Inosine-5'-monophosphate dehydrogenase (503 aa).

Glycine 20 and serine 22 together coordinate K(+). 2 CBS domains span residues 103-163 and 167-228; these read FVVS…ETKV and MTPF…LVDS. 261-263 contributes to the NAD(+) binding site; it reads DSS. K(+)-binding residues include aspartate 264, phenylalanine 266, glycine 314, and glycine 316. 312–314 contributes to the NAD(+) binding site; the sequence is GIG. Residue serine 317 coordinates IMP. Cysteine 319 provides a ligand contact to K(+). Cysteine 319 functions as the Thioimidate intermediate in the catalytic mechanism. IMP contacts are provided by residues 358-360, 381-382, and 405-409; these read DGG, GR, and YWGEG. The active-site Proton acceptor is the arginine 418. Glutamate 431 is an IMP binding site. Residues asparagine 460, glutamate 485, glycine 486, and glycine 487 each coordinate K(+).

This sequence belongs to the IMPDH/GMPR family. In terms of assembly, homotetramer. K(+) is required as a cofactor.

Its subcellular location is the cytoplasm. The enzyme catalyses IMP + NAD(+) + H2O = XMP + NADH + H(+). The protein operates within purine metabolism; XMP biosynthesis via de novo pathway; XMP from IMP: step 1/1. With respect to regulation, mycophenolic acid (MPA) is a non-competitive inhibitor that prevents formation of the closed enzyme conformation by binding to the same site as the amobile flap. In contrast, mizoribine monophosphate (MZP) is a competitive inhibitor that induces the closed conformation. MPA is a potent inhibitor of mammalian IMPDHs but a poor inhibitor of the bacterial enzymes. MZP is a more potent inhibitor of bacterial IMPDH. Its function is as follows. Catalyzes the conversion of inosine 5'-phosphate (IMP) to xanthosine 5'-phosphate (XMP), the first committed and rate-limiting step in the de novo synthesis of guanine nucleotides, and therefore plays an important role in the regulation of cell growth. Could also have a single-stranded nucleic acid-binding activity and could play a role in RNA and/or DNA metabolism. The protein is Inosine-5'-monophosphate dehydrogenase of Tritrichomonas foetus (Trichomonas foetus).